A 193-amino-acid polypeptide reads, in one-letter code: uncharacterized protein (193 aa).

4 helical membrane-spanning segments follow: residues 40–56 (LYIA…LKLI), 63–79 (AAGL…SSLC), 86–110 (CSGY…IVSC), and 117–138 (FIFP…FQIY). Residues 158 to 193 (TTTKLSRSSSAPDLSCPSLSTQPTSPNQSLSAYKKY) form a disordered region.

Belongs to the chlamydial CPn_0442/CT_006/TC_0274 family.

It localises to the cell membrane. This is an uncharacterized protein from Chlamydia muridarum (strain MoPn / Nigg).